The following is a 533-amino-acid chain: Protein transport protein SEC9 (533 aa).

Disordered regions lie at residues 1–32 (MGFKKFFGIRPPEEDTPERNRDLLTEEGIATK), 68–184 (RPGA…MNAT), 200–246 (MAQD…KRAP), and 259–284 (PTNEDDDLNNSIHEGNEGLNGQGQAP). The segment covering 11-24 (PPEEDTPERNRDLL) has biased composition (basic and acidic residues). Positions 92–102 (GNTSRVGQPQQ) are enriched in polar residues. Residues 157–172 (GGPGNPYGGSTAGAGT) are compositionally biased toward gly residues. The segment covering 227-240 (RPQAAAETPRPQAA) has biased composition (low complexity). T-SNARE coiled-coil homology domains follow at residues 318–380 (RFTK…VAEL) and 470–532 (DEME…LTNI).

Belongs to the SNAP-25 family.

The sequence is that of Protein transport protein SEC9 (SEC9) from Eremothecium gossypii (strain ATCC 10895 / CBS 109.51 / FGSC 9923 / NRRL Y-1056) (Yeast).